A 453-amino-acid chain; its full sequence is tRNA modification GTPase MnmE (453 aa).

Residues Arg22, Glu79, and Lys119 each contribute to the (6S)-5-formyl-5,6,7,8-tetrahydrofolate site. Residues 215 to 376 (GMKVVIAGRP…LKQHLKSLMG (162 aa)) enclose the TrmE-type G domain. Residue Asn225 coordinates K(+). Residues 225–230 (NAGKSS), 244–250 (TEIAGTT), 269–272 (DTAG), and 334–337 (NKAD) each bind GTP. Residue Ser229 participates in Mg(2+) binding. Positions 244, 246, and 249 each coordinate K(+). Thr250 is a binding site for Mg(2+). A (6S)-5-formyl-5,6,7,8-tetrahydrofolate-binding site is contributed by Lys453.

Belongs to the TRAFAC class TrmE-Era-EngA-EngB-Septin-like GTPase superfamily. TrmE GTPase family. As to quaternary structure, homodimer. Heterotetramer of two MnmE and two MnmG subunits. Requires K(+) as cofactor.

The protein resides in the cytoplasm. Exhibits a very high intrinsic GTPase hydrolysis rate. Involved in the addition of a carboxymethylaminomethyl (cmnm) group at the wobble position (U34) of certain tRNAs, forming tRNA-cmnm(5)s(2)U34. The polypeptide is tRNA modification GTPase MnmE (Shewanella sp. (strain MR-7)).